Reading from the N-terminus, the 306-residue chain is Probable rRNA-processing protein EBP2 (306 aa).

Residue Met1 is modified to N-acetylmethionine. Disordered regions lie at residues 1–20 and 77–99; these read MDTP…LVTD and VPEI…VDPE. Phosphothreonine is present on Thr3. Phosphoserine is present on residues Ser7, Ser9, Ser11, Ser13, and Ser16. Lys94 is covalently cross-linked (Glycyl lysine isopeptide (Lys-Gly) (interchain with G-Cter in SUMO2)). A coiled-coil region spans residues 138 to 169; the sequence is AEMAKSDLQMQKIRQKLQTKQAAMERSEKAKQ. Glycyl lysine isopeptide (Lys-Gly) (interchain with G-Cter in SUMO2) cross-links involve residues Lys179 and Lys218. The segment at 213–306 is disordered; the sequence is LEGDQKPLAQ…TREKMKNRTH (94 aa). Ser264 and Ser270 each carry phosphoserine. Positions 274-306 are enriched in basic residues; the sequence is KTAHGRGLKRPGKKGSNKRPGKRTREKMKNRTH.

It belongs to the EBP2 family. Specifically interacts with EBV EBNA1. The EBNA1-EBP2 interaction is important for the stable segregation of EBV episomes during cell division. Interacts with WDR46. In terms of tissue distribution, ubiquitous.

Its subcellular location is the nucleus. It is found in the nucleolus. Functionally, required for the processing of the 27S pre-rRNA. The sequence is that of Probable rRNA-processing protein EBP2 (EBNA1BP2) from Homo sapiens (Human).